The sequence spans 308 residues: Ribosomal RNA small subunit methyltransferase H (308 aa).

S-adenosyl-L-methionine is bound by residues 36-38, Asp55, Phe86, Asp103, and Gln110; that span reads GGH.

The protein belongs to the methyltransferase superfamily. RsmH family.

The protein localises to the cytoplasm. It carries out the reaction cytidine(1402) in 16S rRNA + S-adenosyl-L-methionine = N(4)-methylcytidine(1402) in 16S rRNA + S-adenosyl-L-homocysteine + H(+). Specifically methylates the N4 position of cytidine in position 1402 (C1402) of 16S rRNA. The sequence is that of Ribosomal RNA small subunit methyltransferase H from Helicobacter pylori (strain HPAG1).